Consider the following 396-residue polypeptide: Elongation factor Tu 2 (396 aa).

The region spanning 10 to 206 is the tr-type G domain; it reads KPHINVGTIG…AMDAHIPQPE (197 aa). The segment at 19 to 26 is G1; sequence GHVDHGKT. 19–26 is a GTP binding site; the sequence is GHVDHGKT. Threonine 26 contacts Mg(2+). Residues 60–64 are G2; it reads GITIA. Residues 81–84 are G3; the sequence is DCPG. Residues 81–85 and 136–139 contribute to the GTP site; these read DCPGH and NKAD. The G4 stretch occupies residues 136-139; the sequence is NKAD. Residues 174-176 are G5; sequence SAL.

This sequence belongs to the TRAFAC class translation factor GTPase superfamily. Classic translation factor GTPase family. EF-Tu/EF-1A subfamily. Monomer.

The protein localises to the cytoplasm. It carries out the reaction GTP + H2O = GDP + phosphate + H(+). In terms of biological role, GTP hydrolase that promotes the GTP-dependent binding of aminoacyl-tRNA to the A-site of ribosomes during protein biosynthesis. This is Elongation factor Tu 2 from Halorhodospira halophila (strain DSM 244 / SL1) (Ectothiorhodospira halophila (strain DSM 244 / SL1)).